A 1262-amino-acid chain; its full sequence is Structural maintenance of chromosomes protein 1 (1262 aa).

Positions 171 to 497 form a coiled coil; that stretch reads SRSHEFQAEY…VAVVRQLSEA (327 aa). Positions 524–642 constitute an SMC hinge domain; it reads SVYGRLVDLC…ESQEDAKQLA (119 aa). The stretch at 680–937 forms a coiled coil; that stretch reads KKWDEKVVKQ…RLESLLTKKQ (258 aa). The disordered stretch occupies residues 965–994; sequence EYEEDDGDDTASQSSQSATDGPSVSEEQIQ. Residues 974–991 are compositionally biased toward polar residues; sequence TASQSSQSATDGPSVSEE. The stretch at 1017–1086 forms a coiled coil; that stretch reads DGVRQMSNRL…QQFEKVKTDR (70 aa). The DA-box signature appears at 1148 to 1183; sequence LSGGEKTIAALALLFAVHGRNPAPFFVLDEIDAALD.

It belongs to the SMC family. SMC1 subfamily. In terms of assembly, component of the cohesin complex, composed of the smc-1 and smc-3 heterodimer attached via their SMC hinge domain, scc-1 which links them, and scc-3. Interacts with smc-3, scc-1, scc-3 and tim-1.

The protein resides in the nucleus. It is found in the chromosome. Involved in chromosome cohesion during cell cycle and in DNA repair. Required for chromosome segregation during mitosis. Central component of cohesin complex. The cohesin complex is required for the cohesion of sister chromatids after DNA replication. The cohesin complex apparently forms a large proteinaceous ring within which sister chromatids can be trapped. At anaphase, the complex is cleaved and dissociates from chromatin, allowing sister chromatids to segregate. In Caenorhabditis elegans, this protein is Structural maintenance of chromosomes protein 1.